The chain runs to 339 residues: MAPLVPSSQPWVEKYRPRQVKDVAHQEEVVRVLTTTLQTADLPHMLFYGPPGTGKTTTALAIAYQLYGPELYKSRVLELNASDDRGINVVRTKIKDFAAVAVGSARKGGYPCPPYKIIILDEADSMTEDAQNALRRTMETYSKVTRFFFICNYISRIIEPLASRCAKFRFKPLSEEVMSNRILHICNEEGLSLDAQALATLSTISNGDLRRAITYLQSAARLFGSSISSTDLISVSGAIPEDVVKSLLASCKSGEFDVANKEVNNIIADGYPVSQLISQFLDVIVNADDIPDEQKARICKKLGEADKCLVDGADEYLQLLDVASETIRALFDMPQTLVF.

Residue 48 to 55 (YGPPGTGK) participates in ATP binding.

This sequence belongs to the activator 1 small subunits family. Heterotetramer of subunits RFC2, RFC3, RFC4 and RFC5 that can form a complex with RFC1. Expressed in roots, leaves, shoot apical meristem (SAM), flag leaves and panicles.

It is found in the nucleus. Functionally, may be involved in DNA replication and thus regulate cell proliferation. The sequence is that of Replication factor C subunit 2 (RFC2) from Oryza sativa subsp. japonica (Rice).